Consider the following 215-residue polypeptide: Thymidylate kinase (215 aa).

12–19 provides a ligand contact to ATP; it reads GLEGAGKT.

Belongs to the thymidylate kinase family.

It catalyses the reaction dTMP + ATP = dTDP + ADP. In terms of biological role, phosphorylation of dTMP to form dTDP in both de novo and salvage pathways of dTTP synthesis. The chain is Thymidylate kinase from Halorhodospira halophila (strain DSM 244 / SL1) (Ectothiorhodospira halophila (strain DSM 244 / SL1)).